Here is a 743-residue protein sequence, read N- to C-terminus: Tudor domain-containing protein 3 (743 aa).

Residues 241-262 (KTFGGGGGGARSNLNIGAAGHR) form a disordered region. Positions 286 to 326 (LVDEKALKHITEMGFSKEASRQALMDNANNLEAALNVLLNS) constitute a UBA domain. 2 disordered regions span residues 327–365 (SKQK…APST) and 380–549 (EEPK…CYER). Residue serine 349 is modified to Phosphoserine. Positions 414–431 (PRNDTRQPRNERPPRFQK) are enriched in basic and acidic residues. The segment covering 432 to 445 (DTPTSKSTVENSVL) has biased composition (polar residues). Serine 438 carries the post-translational modification Phosphoserine. Composition is skewed to basic and acidic residues over residues 464 to 484 (AEER…KDAS) and 536 to 549 (RENQ…CYER). Lysine 563 participates in a covalent cross-link: Glycyl lysine isopeptide (Lys-Gly) (interchain with G-Cter in SUMO2). A disordered region spans residues 572–603 (TDYPRPVQSNSLGVPNGETAPPLKGRRVGPIK). In terms of domain architecture, Tudor spans 647-707 (VWKPGDECFA…KPVQTEAWEE (61 aa)). A compositionally biased stretch (basic and acidic residues) spans 711-725 (YDHTIEFRRGGDGQP). The segment at 711–743 (YDHTIEFRRGGDGQPRRSTRPTQQFYQPPRARN) is disordered. Positions 723-743 (GQPRRSTRPTQQFYQPPRARN) are EBM motif; may mediate interaction with the EJC.

As to quaternary structure, component of mRNA stress granules. Interacts with FMR1, FXR1, FXR2, EWSR1, FUS, SERBP1, EEF1A1 and DDX3X or DDX3Y, and with the small nuclear ribonucleoprotein-associated proteins SNRPB and SNRPN. Interacts with 'Lys-48'-linked tetra-ubiquitin, but not with monoubiquitin or 'Lys-63'-linked ubiquitin chains. May interact with the exon junction complex (EJC) composed at least of CASC3, EIF4A3, MAGOH and RBM8A. Interacts with POLR2A (via the C-terminal domain (CTD)).

It is found in the cytoplasm. The protein resides in the nucleus. Its function is as follows. Scaffolding protein that specifically recognizes and binds dimethylarginine-containing proteins. Plays a role in the regulation of translation of target mRNAs by binding Arg/Gly-rich motifs (GAR) in dimethylarginine-containing proteins. In nucleus, acts as a coactivator: recognizes and binds asymmetric dimethylation on the core histone tails associated with transcriptional activation (H3R17me2a and H4R3me2a) and recruits proteins at these arginine-methylated loci. In cytoplasm, acts as an antiviral factor that participates in the assembly of stress granules together with G3BP1. This chain is Tudor domain-containing protein 3 (Tdrd3), found in Mus musculus (Mouse).